The following is a 103-amino-acid chain: Large ribosomal subunit protein bL21 (103 aa).

Belongs to the bacterial ribosomal protein bL21 family. Part of the 50S ribosomal subunit. Contacts protein L20.

This protein binds to 23S rRNA in the presence of protein L20. The sequence is that of Large ribosomal subunit protein bL21 from Laribacter hongkongensis (strain HLHK9).